We begin with the raw amino-acid sequence, 260 residues long: uncharacterized protein (260 aa).

The N-terminal stretch at 1–22 is a signal peptide; it reads MGYLKRFALYISILVLIVMVAG. Residue Cys23 is the site of N-palmitoyl cysteine attachment. Cys23 carries the S-diacylglycerol cysteine lipid modification.

It belongs to the staphylococcal tandem lipoprotein family.

The protein resides in the cell membrane. This is an uncharacterized protein from Staphylococcus aureus (strain bovine RF122 / ET3-1).